Reading from the N-terminus, the 479-residue chain is mRNA export factor ICP27 homolog (479 aa).

Low complexity predominate over residues 1 to 15 (MVPSQRLSRTSSISS). Disordered stretches follow at residues 1–78 (MVPS…SSVV) and 92–210 (KWDL…NKPW). The span at 35 to 44 (TDCDMDPMEG) shows a compositional bias: acidic residues. Over residues 132 to 142 (EVHGCTDESYG) the composition is skewed to basic and acidic residues. Zn(2+) is bound by residues cysteine 354, histidine 445, cysteine 449, and cysteine 454. The CHC2-type zinc finger occupies 354–454 (CFLPNTRDYN…HTRDCRSASC (101 aa)).

The protein belongs to the HHV-1 ICP27 protein family. Interacts with host XPO1 and with the XPO1 export pathway components small GTPase RAN and nucleoporin NUP214. Interacts with host SPEN, OTT1 and OTT3. Interacts with host SRSF1, SRSF3, SRSF7 and SRPK1. Interacts with host DHX9; this interaction may have an inhibitory effect on virion production. Interacts (via N-terminus) with host NXF1; this interaction plays a role in mRNA export. Post-translationally, phosphorylated by cellular protein kinase CK2.

The protein resides in the host nucleus. It is found in the host cytoplasm. In terms of biological role, promotes the nuclear export of a subset of early and late viral mRNAs by interacting with mRNAs and cellular export proteins. Additionally may prevent the establishment of cellular antiviral state, by acting as an alternative splicing factor for cellular RNAs such as STAT1, resulting in a STAT1 mRNA incapable of producing the STAT1alpha isoform. In Homo sapiens (Human), this protein is mRNA export factor ICP27 homolog.